The chain runs to 428 residues: ATP phosphoribosyltransferase regulatory subunit (428 aa).

This sequence belongs to the class-II aminoacyl-tRNA synthetase family. HisZ subfamily. Heteromultimer composed of HisG and HisZ subunits.

The protein localises to the cytoplasm. Its pathway is amino-acid biosynthesis; L-histidine biosynthesis; L-histidine from 5-phospho-alpha-D-ribose 1-diphosphate: step 1/9. Functionally, required for the first step of histidine biosynthesis. May allow the feedback regulation of ATP phosphoribosyltransferase activity by histidine. In Syntrophotalea carbinolica (strain DSM 2380 / NBRC 103641 / GraBd1) (Pelobacter carbinolicus), this protein is ATP phosphoribosyltransferase regulatory subunit.